A 247-amino-acid chain; its full sequence is Pyridoxine 5'-phosphate synthase (247 aa).

3-amino-2-oxopropyl phosphate is bound at residue asparagine 9. Position 11–12 (11–12) interacts with 1-deoxy-D-xylulose 5-phosphate; the sequence is DH. Arginine 20 is a 3-amino-2-oxopropyl phosphate binding site. Histidine 45 serves as the catalytic Proton acceptor. Positions 47 and 52 each coordinate 1-deoxy-D-xylulose 5-phosphate. Residue glutamate 72 is the Proton acceptor of the active site. Residue threonine 102 participates in 1-deoxy-D-xylulose 5-phosphate binding. Residue histidine 193 is the Proton donor of the active site. 3-amino-2-oxopropyl phosphate is bound by residues glycine 194 and 215–216; that span reads GH.

This sequence belongs to the PNP synthase family. In terms of assembly, homooctamer; tetramer of dimers.

The protein resides in the cytoplasm. The enzyme catalyses 3-amino-2-oxopropyl phosphate + 1-deoxy-D-xylulose 5-phosphate = pyridoxine 5'-phosphate + phosphate + 2 H2O + H(+). It participates in cofactor biosynthesis; pyridoxine 5'-phosphate biosynthesis; pyridoxine 5'-phosphate from D-erythrose 4-phosphate: step 5/5. Catalyzes the complicated ring closure reaction between the two acyclic compounds 1-deoxy-D-xylulose-5-phosphate (DXP) and 3-amino-2-oxopropyl phosphate (1-amino-acetone-3-phosphate or AAP) to form pyridoxine 5'-phosphate (PNP) and inorganic phosphate. The chain is Pyridoxine 5'-phosphate synthase from Blochmanniella floridana.